We begin with the raw amino-acid sequence, 138 residues long: Cysteine desulfuration protein SufE (138 aa).

The Cysteine persulfide intermediate role is filled by C51.

It belongs to the SufE family. Homodimer. Interacts with SufS.

Its subcellular location is the cytoplasm. The protein operates within cofactor biosynthesis; iron-sulfur cluster biosynthesis. In terms of biological role, participates in cysteine desulfuration mediated by SufS. Cysteine desulfuration mobilizes sulfur from L-cysteine to yield L-alanine and constitutes an essential step in sulfur metabolism for biosynthesis of a variety of sulfur-containing biomolecules. Functions as a sulfur acceptor for SufS, by mediating the direct transfer of the sulfur atom from the S-sulfanylcysteine of SufS, an intermediate product of cysteine desulfuration process. This chain is Cysteine desulfuration protein SufE, found in Salmonella dublin (strain CT_02021853).